Consider the following 565-residue polypeptide: NAD-dependent malic enzyme (565 aa).

The active-site Proton donor is the Tyr104. Arg157 is an NAD(+) binding site. Lys175 acts as the Proton acceptor in catalysis. Positions 246, 247, and 270 each coordinate a divalent metal cation. NAD(+)-binding residues include Asp270 and Asn418.

Belongs to the malic enzymes family. In terms of assembly, homotetramer. Requires Mg(2+) as cofactor. Mn(2+) serves as cofactor.

The catalysed reaction is (S)-malate + NAD(+) = pyruvate + CO2 + NADH. It catalyses the reaction oxaloacetate + H(+) = pyruvate + CO2. The polypeptide is NAD-dependent malic enzyme (Escherichia coli O6:H1 (strain CFT073 / ATCC 700928 / UPEC)).